The sequence spans 478 residues: Protein ZINC INDUCED FACILITATOR-LIKE 1 (478 aa).

Transmembrane regions (helical) follow at residues 43-63 (IIVL…YFMI), 81-101 (FVGC…GLVA), 108-128 (PVIL…GLSL), 130-150 (FWMA…LGPI), 169-189 (AVST…GFLA), 208-228 (FPFF…TIVS), 280-300 (IIVY…FSLW), 317-337 (VGSV…SLYS), 346-367 (IIVT…PLIA), 378-398 (VTSA…GLFI), 415-435 (IAMT…GIIF), and 453-473 (VFFI…KPFL).

This sequence belongs to the major facilitator superfamily. As to expression, predominantly expressed in roots and stomatal guard cells. Detected in anther stamen filaments and shoot apical meristem. In the mature portion of roots, restricted to the cortex. At the root tip, highly expressed in both the cortical and epidermal cell layers of the apical meristem and the transition zone, while absent from the quiescent center or the columella cells. Not detected in lateral root primordia.

It is found in the cell membrane. The protein localises to the vacuole membrane. Functionally, major facilitator superfamily (MFS) transporter probably involved in 2,4-dichlorophenoxyacetic acid (2,4-D) export. K(+) may be the physiological substrate of the transporter. In terms of biological role, modulates root auxin-related processes. Involved in auxin efflux and acts as a positive regulator of shootward transport at the root apex. May mediate proton efflux from the vacuolar compartment. Its function is as follows. Mediates drought stress tolerance by regulating stomatal closure. In Arabidopsis thaliana (Mouse-ear cress), this protein is Protein ZINC INDUCED FACILITATOR-LIKE 1 (ZIFL1).